Reading from the N-terminus, the 208-residue chain is Transmembrane emp24 domain-containing protein p24beta2 (208 aa).

Residues 1–21 (MSLKGTIVLLGLLWSFQATLG) form the signal peptide. The Lumenal segment spans residues 22 to 176 (IRFVIDREEC…ENMSKRAVHK (155 aa)). The region spanning 29-116 (EECFSHKAEY…HETIDFDVQL (88 aa)) is the GOLD domain. Residues 134 to 149 (LMEQISKLEEALYNIQ) are a coiled coil. Asparagine 168 carries N-linked (GlcNAc...) asparagine glycosylation. The helical transmembrane segment at 177–195 (ALFESFALIGASFLQVYLL) threads the bilayer. Residues 196–208 (RRLFERKLGMSRV) are Cytoplasmic-facing. The short motif at 198-199 (LF) is the COPII vesicle coat-binding element. A COPI vesicle coat-binding motif is present at residues 198–208 (LFERKLGMSRV). Positions 207–208 (RV) match the Required for the export from the endoplasmic reticulum to the Golgi motif.

Belongs to the EMP24/GP25L family. In terms of assembly, probably oligomerizes with other members of the EMP24/GP25L family. Associates with the COPI vesicle coat (coatomer). Associates with the COPII vesicle coat (coatomer). Interacts with p24delta5.

The protein resides in the golgi apparatus. Its subcellular location is the cis-Golgi network membrane. It is found in the golgi stack membrane. Involved in vesicular protein trafficking. Mainly functions in the early secretory pathway but also in post-Golgi membranes. Thought to act as cargo receptor at the lumenal side for incorporation of secretory cargo molecules into transport vesicles and to be involved in vesicle coat formation at the cytoplasmic side. Interacts with p24delta5 at endoplasmic reticulum export sites for endoplasmic reticulum exit and coupled transport to the Golgi apparatus. In Arabidopsis thaliana (Mouse-ear cress), this protein is Transmembrane emp24 domain-containing protein p24beta2.